Consider the following 546-residue polypeptide: Chaperonin GroEL 5 (546 aa).

Residues 30–33 (TLGP), Lys-51, 87–91 (DGTTT), Gly-415, and Asp-495 contribute to the ATP site.

The protein belongs to the chaperonin (HSP60) family. Forms a cylinder of 14 subunits composed of two heptameric rings stacked back-to-back. Interacts with the co-chaperonin GroES.

The protein resides in the cytoplasm. The catalysed reaction is ATP + H2O + a folded polypeptide = ADP + phosphate + an unfolded polypeptide.. Its function is as follows. Together with its co-chaperonin GroES, plays an essential role in assisting protein folding. The GroEL-GroES system forms a nano-cage that allows encapsulation of the non-native substrate proteins and provides a physical environment optimized to promote and accelerate protein folding. This is Chaperonin GroEL 5 from Paraburkholderia xenovorans (strain LB400).